Here is a 169-residue protein sequence, read N- to C-terminus: Ribosome maturation factor RimP (169 aa).

The protein belongs to the RimP family.

Its subcellular location is the cytoplasm. In terms of biological role, required for maturation of 30S ribosomal subunits. This is Ribosome maturation factor RimP from Pseudomonas putida (strain W619).